A 188-amino-acid chain; its full sequence is dCTP deaminase (188 aa).

DCTP-binding positions include 111–116, 135–137, Q156, Y170, and Q180; these read KSTYAR and TLE. The Proton donor/acceptor role is filled by E137.

The protein belongs to the dCTP deaminase family. Homotrimer.

It carries out the reaction dCTP + H2O + H(+) = dUTP + NH4(+). It participates in pyrimidine metabolism; dUMP biosynthesis; dUMP from dCTP (dUTP route): step 1/2. Catalyzes the deamination of dCTP to dUTP. The chain is dCTP deaminase from Aromatoleum aromaticum (strain DSM 19018 / LMG 30748 / EbN1) (Azoarcus sp. (strain EbN1)).